The chain runs to 184 residues: Ribosome-recycling factor (184 aa).

The protein belongs to the RRF family.

It localises to the cytoplasm. Responsible for the release of ribosomes from messenger RNA at the termination of protein biosynthesis. May increase the efficiency of translation by recycling ribosomes from one round of translation to another. The protein is Ribosome-recycling factor of Cutibacterium acnes (strain DSM 16379 / KPA171202) (Propionibacterium acnes).